We begin with the raw amino-acid sequence, 315 residues long: tRNA wybutosine-synthesizing protein 5 (315 aa).

One can recognise a JmjC domain in the interval 102–267 (DEKYYLRSLG…YDKTDTYGNK (166 aa)). Tyr-106 contributes to the 2-oxoglutarate binding site. Fe cation-binding residues include His-160 and Asp-162. 2-oxoglutarate-binding residues include Asn-166 and Lys-175. His-235 lines the Fe cation pocket.

This sequence belongs to the TYW5 family. As to quaternary structure, homodimer. The cofactor is Fe(2+).

It catalyses the reaction 7-[(3S)-3-amino-3-carboxypropyl]wyosine(37) in tRNA(Phe) + 2-oxoglutarate + O2 = 7-(2-hydroxy-3-amino-3-carboxypropyl)wyosine(37) in tRNA(Phe) + succinate + CO2. The protein operates within tRNA modification; wybutosine-tRNA(Phe) biosynthesis. Functionally, tRNA hydroxylase that acts as a component of the wybutosine biosynthesis pathway. Wybutosine is a hyper modified guanosine with a tricyclic base found at the 3'-position adjacent to the anticodon of eukaryotic phenylalanine tRNA. Catalyzes the hydroxylation of 7-(a-amino-a-carboxypropyl)wyosine (yW-72) into undermodified hydroxywybutosine (OHyW*). OHyW* being further transformed into hydroxywybutosine (OHyW) by LCMT2/TYW4. OHyW is a derivative of wybutosine found in higher eukaryotes. This Homo sapiens (Human) protein is tRNA wybutosine-synthesizing protein 5 (TYW5).